The primary structure comprises 460 residues: Putative glycoside/cation symporter YagG (460 aa).

Over 1-9 (MTQLTMKDK) the chain is Cytoplasmic. The next 2 membrane-spanning stretches (helical) occupy residues 10–30 (IGYG…MFLL) and 31–51 (AYFY…LFLV). Over 52 to 78 (SRVLDAVTDPLMGLLVDRTRTRHGQFR) the chain is Cytoplasmic. Residues 79-99 (PFLLWGAIPFGIVCVLTFYTP) traverse the membrane as a helical segment. At 100 to 106 (DFSAQGK) the chain is on the periplasmic side. The chain crosses the membrane as a helical span at residues 107–127 (IIYACVTYILLTLVYTFVNVP). Topologically, residues 128-150 (YCAMPGVITADPKERHALQSWRF) are cytoplasmic. A helical transmembrane segment spans residues 151–171 (FLAAAGSLAISGIALPLVSII). Residues 172–179 (GKGDEQVG) are Periplasmic-facing. A helical transmembrane segment spans residues 180–200 (YFGAMCVLGLSGVVLLYVCFF). Residues 201–262 (TTKERYTFEV…FVKYVMDHPE (62 aa)) are Cytoplasmic-facing. A helical membrane pass occupies residues 263–283 (LATQFLLYGSLATMFGSLCSS). The Periplasmic segment spans residues 284 to 308 (RLLGRFDRVTAFKWIIVAYSLISLL). The chain crosses the membrane as a helical span at residues 309 to 329 (IFVTPAEHIALIFALNILFLF). The Cytoplasmic portion of the chain corresponds to 330–366 (VFNTTTPLQWLMASDVVDYEESRSGRRLDGLVFSTYL). Residues 367–387 (FSLKIGLAIGGAVVGWILAYV) form a helical membrane-spanning segment. At 388–405 (NYSASSSVQPVEVLTTIK) the chain is on the periplasmic side. Residues 406–426 (ILFCVVPVVLYAGMFIMLSLY) form a helical membrane-spanning segment. Residues 427–460 (KLTDARVEAISRQLIKHRAAQGEAVPDAATAASH) lie on the Cytoplasmic side of the membrane.

This sequence belongs to the sodium:galactoside symporter (TC 2.A.2) family.

It localises to the cell inner membrane. The sequence is that of Putative glycoside/cation symporter YagG (yagG) from Escherichia coli (strain K12).